The following is a 288-amino-acid chain: Polyamine aminopropyltransferase (288 aa).

In terms of domain architecture, PABS spans 11–245; the sequence is IEWYPRGYGV…SPWSFLVGVK (235 aa). Position 36 (glutamine 36) interacts with S-methyl-5'-thioadenosine. The spermidine site is built by histidine 67 and aspartate 91. Residues glutamate 111 and 148–149 each bind S-methyl-5'-thioadenosine; that span reads DG. Aspartate 166 acts as the Proton acceptor in catalysis. 166 to 169 is a binding site for spermidine; it reads DSTD. S-methyl-5'-thioadenosine is bound at residue proline 173.

It belongs to the spermidine/spermine synthase family. In terms of assembly, homodimer or homotetramer.

It is found in the cytoplasm. The enzyme catalyses S-adenosyl 3-(methylsulfanyl)propylamine + agmatine = N(1)-(3-aminopropyl)agmatine + S-methyl-5'-thioadenosine + H(+). The catalysed reaction is S-adenosyl 3-(methylsulfanyl)propylamine + putrescine = S-methyl-5'-thioadenosine + spermidine + H(+). It catalyses the reaction cadaverine + S-adenosyl 3-(methylsulfanyl)propylamine = aminopropylcadaverine + S-methyl-5'-thioadenosine + H(+). It participates in amine and polyamine biosynthesis; spermidine biosynthesis; spermidine from putrescine: step 1/1. Its function is as follows. Involved in the biosynthesis of polyamines which are thought to support the growth of thermophilic microorganisms under high-temperature conditions. It seems that long-chain and branched-chain of polyamines effectively stabilize DNA and RNA, respectively. Catalyzes the irreversible transfer of a propylamine group from the amino donor S-adenosylmethioninamine (decarboxy-AdoMet) to agmatine to yield N1-aminopropylagmatine. It can also use cadaverine (1,5-diaminopentane) and putrescine (1,4-diaminobutane) as substrate with a lower activity than that of agmatine. The reaction involves a nucleophilic attack on the C-3 methylene of the propylamine moiety adjacent to the positively charged sulfur of decarboxy-AdoMet. The chain is Polyamine aminopropyltransferase from Thermococcus kodakarensis (strain ATCC BAA-918 / JCM 12380 / KOD1) (Pyrococcus kodakaraensis (strain KOD1)).